The primary structure comprises 209 residues: Large ribosomal subunit protein uL3 (209 aa).

This sequence belongs to the universal ribosomal protein uL3 family. In terms of assembly, part of the 50S ribosomal subunit. Forms a cluster with proteins L14 and L19.

Its function is as follows. One of the primary rRNA binding proteins, it binds directly near the 3'-end of the 23S rRNA, where it nucleates assembly of the 50S subunit. This chain is Large ribosomal subunit protein uL3, found in Nitratidesulfovibrio vulgaris (strain ATCC 29579 / DSM 644 / CCUG 34227 / NCIMB 8303 / VKM B-1760 / Hildenborough) (Desulfovibrio vulgaris).